A 187-amino-acid polypeptide reads, in one-letter code: MNLKHHFLIAMPSIKNPLFRRSVVYIYQHSTEGAMGILINKPIHKYTIKNILNKLKINIEKNIDMDKLNHPVLFGGPLSDDRSFILHSPCYSFKSSVNISREITITTSNDIFNTIGTSSQPEKILVALGCSEWGKGQLEQEVIHNAWITTLANLKILFNTPIYDRWYESAKIIGIDIRNISSEIGHS.

It belongs to the UPF0301 (AlgH) family.

This Wigglesworthia glossinidia brevipalpis protein is UPF0301 protein WIGBR1650.